Consider the following 116-residue polypeptide: UPF0342 protein lhv_1666 (116 aa).

Belongs to the UPF0342 family.

This chain is UPF0342 protein lhv_1666, found in Lactobacillus helveticus (strain DPC 4571).